We begin with the raw amino-acid sequence, 337 residues long: Probable sulfurtransferase (337 aa).

G83 lines the ATP pocket. [4Fe-4S] cluster-binding residues include C172 and C175. The ATP site is built by K179 and G206. [4Fe-4S] cluster is bound at residue C284.

This sequence belongs to the TtcA family. Requires [4Fe-4S] cluster as cofactor. It depends on Mg(2+) as a cofactor.

The chain is Probable sulfurtransferase from Methanocaldococcus jannaschii (strain ATCC 43067 / DSM 2661 / JAL-1 / JCM 10045 / NBRC 100440) (Methanococcus jannaschii).